We begin with the raw amino-acid sequence, 255 residues long: tRNA (guanine-N(1)-)-methyltransferase (255 aa).

S-adenosyl-L-methionine is bound by residues G113 and 133–138; that span reads IGDYVL.

It belongs to the RNA methyltransferase TrmD family. Homodimer.

The protein localises to the cytoplasm. It catalyses the reaction guanosine(37) in tRNA + S-adenosyl-L-methionine = N(1)-methylguanosine(37) in tRNA + S-adenosyl-L-homocysteine + H(+). Specifically methylates guanosine-37 in various tRNAs. This chain is tRNA (guanine-N(1)-)-methyltransferase, found in Enterobacter sp. (strain 638).